The chain runs to 515 residues: Maturase K (515 aa).

Belongs to the intron maturase 2 family. MatK subfamily.

Its subcellular location is the plastid. The protein resides in the chloroplast. In terms of biological role, usually encoded in the trnK tRNA gene intron. Probably assists in splicing its own and other chloroplast group II introns. The polypeptide is Maturase K (Pinus attenuata (Knobcone pine)).